The following is a 447-amino-acid chain: UDP-glycosyltransferase 76E3 (447 aa).

UDP-alpha-D-glucose is bound by residues Ser269, 328–330 (APQ), 345–353 (HCGWNSTLE), and 367–370 (QGEQ).

The protein belongs to the UDP-glycosyltransferase family.

This chain is UDP-glycosyltransferase 76E3 (UGT76E3), found in Arabidopsis thaliana (Mouse-ear cress).